The sequence spans 289 residues: Purine nucleoside phosphorylase (289 aa).

Met1 carries the post-translational modification N-acetylmethionine. Residues Ser33, His64, and 84–86 contribute to the phosphate site; that span reads RFH. Residue Tyr88 coordinates a purine D-ribonucleoside. Ala116 serves as a coordination point for phosphate. A purine D-ribonucleoside-binding residues include Glu201 and Met219. Ser220 lines the phosphate pocket. A purine D-ribonucleoside is bound at residue Asn243. Ser251 carries the phosphoserine modification. Residue His257 participates in a purine D-ribonucleoside binding.

Belongs to the PNP/MTAP phosphorylase family. Homotrimer. Expressed in red blood cells; overexpressed in red blood cells (cytoplasm) of patients with hereditary non-spherocytic hemolytic anemia of unknown etiology.

The protein localises to the cytoplasm. The catalysed reaction is inosine + phosphate = alpha-D-ribose 1-phosphate + hypoxanthine. It catalyses the reaction guanosine + phosphate = alpha-D-ribose 1-phosphate + guanine. It carries out the reaction 2'-deoxyguanosine + phosphate = 2-deoxy-alpha-D-ribose 1-phosphate + guanine. The enzyme catalyses 2'-deoxyinosine + phosphate = 2-deoxy-alpha-D-ribose 1-phosphate + hypoxanthine. It functions in the pathway purine metabolism; purine nucleoside salvage. Its activity is regulated as follows. Inhibited by 5'-deaza-1'-aza-2c-deoxy-1'-(9-methylene)-Immucilin-G (DADMe-ImmG). Its function is as follows. Catalyzes the phosphorolytic breakdown of the N-glycosidic bond in the beta-(deoxy)ribonucleoside molecules, with the formation of the corresponding free purine bases and pentose-1-phosphate. Preferentially acts on 6-oxopurine nucleosides including inosine and guanosine. In Homo sapiens (Human), this protein is Purine nucleoside phosphorylase (PNP).